Here is a 317-residue protein sequence, read N- to C-terminus: tRNA dimethylallyltransferase (317 aa).

19 to 26 (GPTASGKS) is a binding site for ATP. Substrate is bound at residue 21–26 (TASGKS). Residues 44 to 47 (DSMQ) are interaction with substrate tRNA.

Belongs to the IPP transferase family. Monomer. It depends on Mg(2+) as a cofactor.

It carries out the reaction adenosine(37) in tRNA + dimethylallyl diphosphate = N(6)-dimethylallyladenosine(37) in tRNA + diphosphate. Catalyzes the transfer of a dimethylallyl group onto the adenine at position 37 in tRNAs that read codons beginning with uridine, leading to the formation of N6-(dimethylallyl)adenosine (i(6)A). In Methylorubrum extorquens (strain PA1) (Methylobacterium extorquens), this protein is tRNA dimethylallyltransferase.